The sequence spans 290 residues: ATP synthase gamma chain (290 aa).

This sequence belongs to the ATPase gamma chain family. As to quaternary structure, F-type ATPases have 2 components, CF(1) - the catalytic core - and CF(0) - the membrane proton channel. CF(1) has five subunits: alpha(3), beta(3), gamma(1), delta(1), epsilon(1). CF(0) has three main subunits: a, b and c.

It is found in the cell membrane. Produces ATP from ADP in the presence of a proton gradient across the membrane. The gamma chain is believed to be important in regulating ATPase activity and the flow of protons through the CF(0) complex. The protein is ATP synthase gamma chain of Rubrobacter xylanophilus (strain DSM 9941 / JCM 11954 / NBRC 16129 / PRD-1).